We begin with the raw amino-acid sequence, 143 residues long: Small ribosomal subunit protein bS18m (143 aa).

Belongs to the bacterial ribosomal protein bS18 family. Component of the mitochondrial ribosome small subunit (28S) which comprises a 12S rRNA and about 30 distinct proteins.

Its subcellular location is the mitochondrion. This chain is Small ribosomal subunit protein bS18m (MRPS18C), found in Bos taurus (Bovine).